The following is a 439-amino-acid chain: Actin-related protein 3 (439 aa).

Residues 40–71 (PSAGTGGSGSGRPAVANKPSFLTGGAGPGGHL) form a disordered region.

It belongs to the actin family. ARP3 subfamily. Component of the Arp2/3 complex composed.

It localises to the cytoplasm. The protein localises to the cytoskeleton. Functionally, functions as ATP-binding component of the Arp2/3 complex which is involved in regulation of actin polymerization and together with an activating nucleation-promoting factor (NPF) mediates the formation of branched actin networks. Seems to contact the pointed end of the daughter actin filament. This is Actin-related protein 3 (arp-3) from Neurospora crassa (strain ATCC 24698 / 74-OR23-1A / CBS 708.71 / DSM 1257 / FGSC 987).